The sequence spans 196 residues: Protein GrpE (196 aa).

Residues 1 to 24 (MAENERTTENFQPQDPSYAEAATT) are disordered.

This sequence belongs to the GrpE family. In terms of assembly, homodimer.

The protein resides in the cytoplasm. Functionally, participates actively in the response to hyperosmotic and heat shock by preventing the aggregation of stress-denatured proteins, in association with DnaK and GrpE. It is the nucleotide exchange factor for DnaK and may function as a thermosensor. Unfolded proteins bind initially to DnaJ; upon interaction with the DnaJ-bound protein, DnaK hydrolyzes its bound ATP, resulting in the formation of a stable complex. GrpE releases ADP from DnaK; ATP binding to DnaK triggers the release of the substrate protein, thus completing the reaction cycle. Several rounds of ATP-dependent interactions between DnaJ, DnaK and GrpE are required for fully efficient folding. The protein is Protein GrpE of Gloeobacter violaceus (strain ATCC 29082 / PCC 7421).